The following is a 677-amino-acid chain: Threonine--tRNA ligase (677 aa).

One can recognise a TGS domain in the interval 1 to 59; sequence MAQATISITVNGEAKEVEATTTGVELFAEDKNIIAVKINGENRDLYTPLNDGDTVDPIA. A catalytic region spans residues 255–561; sequence DHRKLGAEMD…LLEHYAGAFP (307 aa). 3 residues coordinate Zn(2+): Cys-360, His-411, and His-538.

This sequence belongs to the class-II aminoacyl-tRNA synthetase family. In terms of assembly, homodimer. Zn(2+) serves as cofactor.

Its subcellular location is the cytoplasm. The enzyme catalyses tRNA(Thr) + L-threonine + ATP = L-threonyl-tRNA(Thr) + AMP + diphosphate + H(+). Catalyzes the attachment of threonine to tRNA(Thr) in a two-step reaction: L-threonine is first activated by ATP to form Thr-AMP and then transferred to the acceptor end of tRNA(Thr). Also edits incorrectly charged L-seryl-tRNA(Thr). In Bifidobacterium longum (strain NCC 2705), this protein is Threonine--tRNA ligase.